Reading from the N-terminus, the 241-residue chain is MMKIKIIFSYDGSAFLGSATQPHKKGVQDALSGALSHLGIFSPLLMASRTDKGVHASYAVASVECGDYFTNLEYLQKQLNKFSHPFIHIKKIEKVKDDFEVRFDVKSREYRYIFSHASYSPFMASYVHFYPKFDLGKANELLGFFVGKKDLKFFCKSGGDNKTTLREIFIARAYAYKDFSIFHFKANGFLRGQIRLSVASVLKVLEGKMSEKELKEQIEAKKQYNHFLAPPNGLYLSRICY.

Asp51 serves as the catalytic Nucleophile. Residue Tyr110 participates in substrate binding.

Belongs to the tRNA pseudouridine synthase TruA family. Homodimer.

The catalysed reaction is uridine(38/39/40) in tRNA = pseudouridine(38/39/40) in tRNA. Functionally, formation of pseudouridine at positions 38, 39 and 40 in the anticodon stem and loop of transfer RNAs. This Campylobacter jejuni subsp. jejuni serotype O:2 (strain ATCC 700819 / NCTC 11168) protein is tRNA pseudouridine synthase A.